We begin with the raw amino-acid sequence, 141 residues long: Hemoglobin subunit alpha (141 aa).

The Globin domain occupies 1-141 (VLSSDDKCNV…VSSVLTSKYR (141 aa)). An O2-binding site is contributed by His-58. His-87 contributes to the heme b binding site.

It belongs to the globin family. Heterotetramer of two alpha chains and two beta chains. As to expression, red blood cells.

Functionally, involved in oxygen transport from the lung to the various peripheral tissues. The sequence is that of Hemoglobin subunit alpha (HBA) from Crocodylus niloticus (Nile crocodile).